Here is a 644-residue protein sequence, read N- to C-terminus: MTLRRFSYTFQARILRGLQARPVFVLPSRSHSTKARPVVDIADAAEHIPTVNIRNWAIISHIDHGKSTLSDRILELTGVIEKSSGKQRVLDKLSVEQRRGITVKAQTCSMIYEYNDEQYLLNLIDTPGHVDFSSEVTHSLAACEGCILLVDATRGIQAQTVSNFYLAFARNLVIIPVLNKIDLPTAEPEKVLAQLEEVFELDRKEALLVSSKTGKNVPELIDAIIQRVPHPICDENASLKCVLIDSWFNTHRGVIGLVRILDGKLVAGAAIYSVNTHRKYVVNEVGFMHPNPVEAQVLLAGQVGYVNWNMKNSAEAILGDTFTQVGHVVKAMPGFEKQQPKVYVNAFPLVRSDYDSLSDSIDRLALNDRSIFVEKDTSDTLGIGWRLGFLGSLHLSVFLDRLKDEYKHEVLVTAPTVPYRITWKDGMTSMVSNPSNFPDARTAYAQVEEPMALVTLVFPREYVGPVMNLCESCRGTQQKCSFLSTARCVLEYLLPMSRLMDGFFDQLKSCTHGYGSLEYEDAGFAPSDIVKLSYLVNGMPIDALCTILHRSSVLRTARASLQRLKSLIPRQLYEVALQAMCEKHIIARETISAARKNVTAKCYGGDVTRKMKLLKNQREGKKRMKQFGNVSIDQGVFYDFLMKS.

The transit peptide at 1–31 (MTLRRFSYTFQARILRGLQARPVFVLPSRSH) directs the protein to the mitochondrion. The 182-residue stretch at 51–232 (VNIRNWAIIS…AIIQRVPHPI (182 aa)) folds into the tr-type G domain. GTP-binding positions include 60–67 (SHIDHGKS), 125–129 (DTPGH), and 179–182 (NKID).

This sequence belongs to the TRAFAC class translation factor GTPase superfamily. Classic translation factor GTPase family. LepA subfamily.

Its subcellular location is the mitochondrion inner membrane. It catalyses the reaction GTP + H2O = GDP + phosphate + H(+). Functionally, promotes mitochondrial protein synthesis. May act as a fidelity factor of the translation reaction, by catalyzing a one-codon backward translocation of tRNAs on improperly translocated ribosomes. Binds to mitochondrial ribosomes in a GTP-dependent manner. The sequence is that of Translation factor guf1, mitochondrial (guf1) from Schizosaccharomyces japonicus (strain yFS275 / FY16936) (Fission yeast).